The chain runs to 22 residues: Hemocyanin subunit 4 (22 aa).

The protein belongs to the tyrosinase family. Hemocyanin subfamily. In terms of tissue distribution, hemolymph.

The protein resides in the secreted. It is found in the extracellular space. Its function is as follows. Hemocyanins are copper-containing oxygen carriers occurring freely dissolved in the hemolymph of many mollusks and arthropods. This Homarus americanus (American lobster) protein is Hemocyanin subunit 4.